A 398-amino-acid chain; its full sequence is Nicotinate phosphoribosyltransferase (398 aa).

His-221 is modified (phosphohistidine; by autocatalysis).

This sequence belongs to the NAPRTase family. Transiently phosphorylated on a His residue during the reaction cycle. Phosphorylation strongly increases the affinity for substrates and increases the rate of nicotinate D-ribonucleotide production. Dephosphorylation regenerates the low-affinity form of the enzyme, leading to product release.

The catalysed reaction is nicotinate + 5-phospho-alpha-D-ribose 1-diphosphate + ATP + H2O = nicotinate beta-D-ribonucleotide + ADP + phosphate + diphosphate. It functions in the pathway cofactor biosynthesis; NAD(+) biosynthesis; nicotinate D-ribonucleotide from nicotinate: step 1/1. In terms of biological role, catalyzes the synthesis of beta-nicotinate D-ribonucleotide from nicotinate and 5-phospho-D-ribose 1-phosphate at the expense of ATP. The polypeptide is Nicotinate phosphoribosyltransferase (Buchnera aphidicola subsp. Schizaphis graminum (strain Sg)).